Reading from the N-terminus, the 335-residue chain is Glucokinase (335 aa).

An ATP-binding site is contributed by 11 to 16 (ADIGGT).

It belongs to the bacterial glucokinase family.

It is found in the cytoplasm. The catalysed reaction is D-glucose + ATP = D-glucose 6-phosphate + ADP + H(+). In Stenotrophomonas maltophilia (strain K279a), this protein is Glucokinase.